A 470-amino-acid chain; its full sequence is E3 SUMO-protein ligase EGR2 (470 aa).

Over residues 126 to 141 (PPASTTASSSVTSASP) the composition is skewed to low complexity. Disordered regions lie at residues 126 to 153 (PPAS…GVCT), 159 to 178 (PELD…SGCT), and 184 to 211 (DPSA…YPSP). Lysine 247 is subject to N6-acetyllysine; by EP300. The tract at residues 275-344 (GPSAGVTGPG…RPYPCPAEGC (70 aa)) is disordered. The span at 281–291 (TGPGASGGGEG) shows a compositional bias: gly residues. 3 C2H2-type zinc fingers span residues 337–361 (YPCP…IRIH), 367–389 (FQCR…IRTH), and 395–417 (FACD…TKIH). The interval 408 to 470 (DERKRHTKIH…ASCTSRTRTP (63 aa)) is disordered. Basic residues predominate over residues 412–422 (RHTKIHLRQKE). Residues 426–439 (SAPSSSASAQSSAS) are compositionally biased toward low complexity. Positions 440 to 450 (GPGGSQAGGSL) are enriched in gly residues.

The protein belongs to the EGR C2H2-type zinc-finger protein family. In terms of assembly, interacts with HCFC1. Interacts with WWP2. Interacts with UBC9. Interacts with CITED1. Interacts (via phosphorylated form) with SFN. Post-translationally, ubiquitinated by WWP2 leading to proteasomal degradation. Acetylated at Lys-247. May be deacetylated by HDAC6, HDAC10 or SIRT1.

Its subcellular location is the nucleus. The protein operates within protein modification; protein sumoylation. Functionally, sequence-specific DNA-binding transcription factor. Plays a role in hindbrain segmentation by regulating the expression of a subset of homeobox containing genes and in Schwann cell myelination by regulating the expression of genes involved in the formation and maintenance of myelin. Binds to two EGR2-consensus sites EGR2A (5'-CTGTAGGAG-3') and EGR2B (5'-ATGTAGGTG-3') in the HOXB3 enhancer and promotes HOXB3 transcriptional activation. Binds to specific DNA sites located in the promoter region of HOXA4, HOXB2 and ERBB2. Regulates hindbrain segmentation by controlling the expression of Hox genes, such as HOXA4, HOXB3 and HOXB2, and thereby specifying odd and even rhombomeres. Promotes the expression of HOXB3 in the rhombomere r5 in the hindbrain. Regulates myelination in the peripheral nervous system after birth, possibly by regulating the expression of myelin proteins, such as MPZ, and by promoting the differentiation of Schwann cells. Involved in the development of the jaw openener musculature, probably by playing a role in its innervation through trigeminal motor neurons. May play a role in adipogenesis, possibly by regulating the expression of CEBPB. Its function is as follows. E3 SUMO-protein ligase helping SUMO1 conjugation to its coregulators NAB1 and NAB2, whose sumoylation down-regulates EGR2 transcriptional activity. This is E3 SUMO-protein ligase EGR2 (Egr2) from Rattus norvegicus (Rat).